Here is a 55-residue protein sequence, read N- to C-terminus: Large ribosomal subunit protein bL33 (55 aa).

The protein belongs to the bacterial ribosomal protein bL33 family.

This Yersinia enterocolitica serotype O:8 / biotype 1B (strain NCTC 13174 / 8081) protein is Large ribosomal subunit protein bL33.